The chain runs to 284 residues: tRNA uridine(34) hydroxylase (284 aa).

One can recognise a Rhodanese domain in the interval 132-226 (AGRPVVMLDT…YFEEVGGAHY (95 aa)). The Cysteine persulfide intermediate role is filled by Cys186.

This sequence belongs to the TrhO family.

It carries out the reaction uridine(34) in tRNA + AH2 + O2 = 5-hydroxyuridine(34) in tRNA + A + H2O. Its function is as follows. Catalyzes oxygen-dependent 5-hydroxyuridine (ho5U) modification at position 34 in tRNAs. In Burkholderia cenocepacia (strain HI2424), this protein is tRNA uridine(34) hydroxylase.